We begin with the raw amino-acid sequence, 1906 residues long: MRVAKWLTGLLCPISLLLTGSWEVRFHPRQEALVKTLASYEVVTPTRVNEFGDVFPQNRHFSRKKRSSGVPEPPPFRTHYRISAYGQLFQLNLSADAAFLAAGYTEVHLGTPVPGPGGRSTESPDLRHCFYRGQVNAREDHTAVFSLCGGLMGTFKANDGEYFLEPVLRADGSAHDDDHNKPHLIYRQELKRNSFARSHKPCEVSENQMEKTALPSQSSRNTTGDVDIEEEAVFRLEGERSQLHSRNKRFLSYPRYVEVMVTADAKMVHHHGQNLQHYVLTLMSIVAAIYKDSSIGNLINIVIVKLVVIHSEQEGPVISFNAATTLRNFCLWQQSQNVPDDAHPSHHDTAVLITREDICGAKEKCDTLGLAELGTLCDPSRSCSISEENGLSAAFTIAHELGHVFNVPHDDSFKCKEAGIKHQYHVMAPTLNYHTSPWTWSACSQKHITEFLDTGHGECLLDKPNGRTYDLSPQLPGSVYDGNRQCELMFGPGSQVCPYLKHCRRLWCTSAEGVHKGCRTQHMPLADGTSCGPGMHCHRGLCVTRDMETRPVDGEWGPWGPYSSCSRTCGGGIKSTARLCDRPEPRNGGRYCVGRRMKFRSCNTDSCPKGKRDFREKQCSDFDGKHFDINGLPPNVRWLPKYSGIAVKDRCKLYCRVAGTTSFYQLKDRVADGTPCGTETNDICVQGLCRQAGCDHVLNSKAKRDKCGVCGGDNSSCQTLAGVFNSAHYGYNVVVKIPAGATNIEILQHSYSGRPEDDNYLALSDTQGNFLLNGNFVVSMAKKEINIQGAVFEYSGSNNSIERINSTDRLEAELVLQVLCVGNLYNPDVRYSFNIPIEERSNLFSWDPYGPWQDCTKMCQGLHRRKIACVRKSDHAVVSDHNCGHLPMPLFVTEKCNMDCELRWHIIGKSDCSSQCGQGYRTLDVHCMKYSVHKGQAVPVGDQYCGDQLKPPSREPCHGSCVLTRWHYSEWSQCSRSCGGGDKTRESYCVNGFGHRLAESECRELPRVVLENCNEFPCPSWATSEWSECPVTCGKGMKQRQVWCQLSEDPMRDGFCNASTKPESLRPCELRACASWHVGPWGSCTATCGHGYQMRAVKCISEIFGTMLDDRECPQASRPSDRQDCILAPCLAIPEVGATSLPAIPLGRAAQWRHGSWTPCSVSCGRGSQARYVSCRDAHDEVADESNCAHLPRPAAVSLCFSPCGEWQAGDWSPCSASCGHGKTTRRVLCVNYHQLVDESYCDPEGRPVTEQECSLAACPPLYSRAPSSSEQPSHVPSRNVPLTHKPGENQDQGAQLSIRGNQWRTGPWGACSRSCAGGLQHRAVVCQDEDGRSATSCDGSSKPPESRHCGSGPCPHWNYGDWGECTQTCGGGVKSRFVICQFPNGQMTQEHSCELPKPPSMMQCHLHACPEDVSWYRGPWKSCSASCGKGVKYREVLCIDQFQRKLEEKYCSHLHKPRTHKACRSGRCPSWKANKWKECSVTCGSGVQQREVYCRLRGTGRVSEDMCDPSTRPQGQRQCWRQDCMRYQWTTGDWLDCSTSCKKKETYRLVKCVNEQNVQANESLCDPLTKPLSIKKCRNPHCKYSVVTGDSSQCAGNCGFTSPQKITYCTKIQSSKKHTFHQLRPVVYGECPVIPSPQAYKCDLRSCLHVATWKVGKWSKCSVTCGIGIMERRVACRTENGWPSDLCLKRLKPDAQKKCYANDCKLLTTCKELQVTNNVTKDGDYDLNVRGRILKIHCSGMQLENPREYLPLVKSEDNFSEIYGLRLQNPYECPFNGSRRPDCACENDYLPAGYTVFSKVRVDLESMQIKTADLLFSQTLSGKAVPFATAGDCYSAARCPQGQFSINLAGTGMKISNTAKWLAQGRYASVIIHRSQDGTKVYGRCGGFCGKCIPHMATGLSIQVL.

The N-terminal stretch at 1–26 (MRVAKWLTGLLCPISLLLTGSWEVRF) is a signal peptide. Residues 27–249 (HPRQEALVKT…RSQLHSRNKR (223 aa)) constitute a propeptide that is removed on maturation. Residues Asn92 and Asn221 are each glycosylated (N-linked (GlcNAc...) asparagine). A disordered region spans residues 201–222 (PCEVSENQMEKTALPSQSSRNT). The Peptidase M12B domain occupies 255-464 (RYVEVMVTAD…GHGECLLDKP (210 aa)). Intrachain disulfides connect Cys330–Cys383, Cys359–Cys365, Cys377–Cys459, Cys415–Cys443, Cys486–Cys508, Cys497–Cys518, Cys503–Cys537, Cys531–Cys542, Cys565–Cys602, Cys569–Cys607, and Cys580–Cys592. Position 399 (His399) interacts with Zn(2+). Glu400 is an active-site residue. Zn(2+) contacts are provided by His403 and His409. Positions 465–552 (NGRTYDLSPQ…VTRDMETRPV (88 aa)) constitute a Disintegrin domain. The TSP type-1 1 domain maps to 553 to 608 (DGEWGPWGPYSSCSRTCGGGIKSTARLCDRPEPRNGGRYCVGRRMKFRSCNTDSCP). Asn714, Asn798, and Asn805 each carry an N-linked (GlcNAc...) asparagine glycan. The segment at 721 to 842 (AGVFNSAHYG…FNIPIEERSN (122 aa)) is spacer. 7 TSP type-1 domains span residues 843-901 (LFSW…MDCE), 906-962 (IIGK…GSCV), 962-1015 (VLTR…NCNE), 1017-1074 (PCPS…RACA), 1075-1131 (SWHV…APCL), 1148-1202 (RAAQ…LCFS), and 1203-1260 (PCGE…AACP). Asn1057 carries N-linked (GlcNAc...) asparagine glycosylation. The segment at 1265–1295 (RAPSSSEQPSHVPSRNVPLTHKPGENQDQGA) is disordered. Over residues 1266–1277 (APSSSEQPSHVP) the composition is skewed to polar residues. 7 TSP type-1 domains span residues 1300-1351 (RGNQ…RHCG), 1354-1411 (PCPH…HACP), 1412-1465 (EDVS…KACR), 1468-1526 (RCPS…QDCM), 1527-1584 (RYQW…PHCK), 1585-1648 (YSVV…LRSC), and 1650-1706 (HVAT…NDCK). Asn1562 carries an N-linked (GlcNAc...) asparagine glycan. A GON domain is found at 1707-1906 (LLTTCKELQV…MATGLSIQVL (200 aa)). N-linked (GlcNAc...) asparagine glycosylation is found at Asn1719, Asn1759, and Asn1777.

The cofactor is Zn(2+). The precursor is cleaved by a furin endopeptidase. In terms of processing, glycosylated. Can be O-fucosylated by POFUT2 on a serine or a threonine residue found within the consensus sequence C1-X(2)-(S/T)-C2-G of the TSP type-1 repeat domains where C1 and C2 are the first and second cysteine residue of the repeat, respectively. Fucosylated repeats can then be further glycosylated by the addition of a beta-1,3-glucose residue by the glucosyltransferase, B3GALTL. Fucosylation mediates the efficient secretion of ADAMTS family members. Can also be C-glycosylated with one or two mannose molecules on tryptophan residues within the consensus sequence W-X-X-W of the TPRs, and N-glycosylated. These other glycosylations can also facilitate secretion. In terms of tissue distribution, expressed at low level in testis and brain.

It localises to the secreted. The protein localises to the extracellular space. The protein resides in the extracellular matrix. Its function is as follows. May play a role in tissue-remodeling process occurring in both normal and pathological conditions. May have a protease-independent function in the transport from the endoplasmic reticulum to the Golgi apparatus of secretory cargos, mediated by the GON domain. This chain is A disintegrin and metalloproteinase with thrombospondin motifs 20 (Adamts20), found in Mus musculus (Mouse).